A 301-amino-acid chain; its full sequence is MKLDYNSREIFFGNEALIVADMTKGSNGKPEFTNHKIVTGLVSVGSMEDQAETNSYPADDVPDHGVKKGATLLQGEMVFIQTDQALKEDILGQQRTENGLGWSPTGNWKTKCVQYLIKGRKRDKVTGEFVDGYRVVVYPHLTPTAEATKESETDSVDGVDPIQWTLAVQATDSDIYSNGGKKVPAIEYEIWGEQAKDFAKKMESGLFIMQPDTVLAGAITLVAPVIPNVTTATKGNNDGTIVVPATLKDSKGGTIKVTSVIKDAHGKVATNGQLAPGVYIVTFSADGYEDVTAGVSVTDHS.

Belongs to the skunalikevirus tail tube protein family. As to quaternary structure, homohexamer. Interacts with the tail terminator protein.

The protein localises to the virion. Forms the cylindrical rigid tail tube with a 4 nm wide central channel for DNA ejection. The tube is composed of 31 hexameric rings. The sequence is that of Tail tube protein from Lactococcus phage SK1 (Lactococcus lactis bacteriophage SK1).